A 92-amino-acid polypeptide reads, in one-letter code: Protein S100-A12 (92 aa).

EF-hand domains follow at residues 13 to 48 (NIFHQYSVRVGHFDTLNKRELKQLITKELPKTLQNT) and 49 to 84 (KDQPTIDKIFQDLDADKDGAVSFEEFVVLVSRVLKT). Histidine 16 lines the Cu cation pocket. Residue histidine 16 participates in Zn(2+) binding. Residues serine 19 and histidine 24 each coordinate Ca(2+). Aspartate 26 serves as a coordination point for Cu cation. Position 26 (aspartate 26) interacts with Zn(2+). Ca(2+) is bound by residues threonine 27 and glutamate 32. The interval 38–53 (TKELPKTLQNTKDQPT) is hinge domain. Residues aspartate 62, aspartate 64, aspartate 66, and glutamate 73 each contribute to the Ca(2+) site. Residues histidine 86 and histidine 90 each contribute to the Cu cation site. Positions 86 and 90 each coordinate Zn(2+).

Belongs to the S-100 family. As to quaternary structure, homodimer. Homooligomer (tetramer or hexamer) in the presence of calcium, zinc and copper ions. Interacts with AGER and both calcium and zinc are essential for the interaction. Interacts with CACYBP in a calcium-dependent manner. Up-regulated in stimulated inflammatory effector cells.

It is found in the secreted. The protein resides in the cytoplasm. The protein localises to the cytoskeleton. Its subcellular location is the cell membrane. Functionally, S100A12 is a calcium-, zinc- and copper-binding protein which plays a prominent role in the regulation of inflammatory processes and immune response. Its pro-inflammatory activity involves recruitment of leukocytes, promotion of cytokine and chemokine production, and regulation of leukocyte adhesion and migration. Acts as an alarmin or a danger associated molecular pattern (DAMP) molecule and stimulates innate immune cells via binding to receptor for advanced glycation endproducts (AGER). Binding to AGER activates the MAP-kinase and NF-kappa-B signaling pathways leading to production of pro-inflammatory cytokines and up-regulation of cell adhesion molecules ICAM1 and VCAM1. Acts as a monocyte and mast cell chemoattractant. Can stimulate mast cell degranulation and activation which generates chemokines, histamine and cytokines inducing further leukocyte recruitment to the sites of inflammation. Can inhibit the activity of matrix metalloproteinases; MMP2, MMP3 and MMP9 by chelating Zn(2+) from their active sites. The sequence is that of Protein S100-A12 (S100A12) from Bos taurus (Bovine).